The following is a 131-amino-acid chain: Small ribosomal subunit protein uS8 (131 aa).

This sequence belongs to the universal ribosomal protein uS8 family. Part of the 30S ribosomal subunit. Contacts proteins S5 and S12.

One of the primary rRNA binding proteins, it binds directly to 16S rRNA central domain where it helps coordinate assembly of the platform of the 30S subunit. The protein is Small ribosomal subunit protein uS8 of Paraburkholderia phymatum (strain DSM 17167 / CIP 108236 / LMG 21445 / STM815) (Burkholderia phymatum).